We begin with the raw amino-acid sequence, 125 residues long: MSLLRQRLQALPVLCLCVLVLACIGACQSEAYEGTPSPPPEQKMSRWNLVQSRMKELLEPAVTRTRDRWQWLWSLSTFRGFMQTYYDDHLRDLGPRTKTWLLESKDSLLNKTYSLCPRLLCAHKN.

The signal sequence occupies residues 1 to 27 (MSLLRQRLQALPVLCLCVLVLACIGAC).

Belongs to the apolipoprotein C4 family.

The protein resides in the secreted. Functionally, may participate in lipoprotein metabolism. In Plecturocebus moloch (Dusky titi monkey), this protein is Apolipoprotein C-IV (APOC4).